Reading from the N-terminus, the 114-residue chain is UPF0102 protein Amet_2739 (114 aa).

Belongs to the UPF0102 family.

In Alkaliphilus metalliredigens (strain QYMF), this protein is UPF0102 protein Amet_2739.